The sequence spans 110 residues: Small ribosomal subunit protein eS25 (110 aa).

The disordered stretch occupies residues 1 to 38 (MGGKKKPTLSQLAKKAEKEKAQQAQKAKKEVKKEETPA). Over residues 14-38 (KKAEKEKAQQAQKAKKEVKKEETPA) the composition is skewed to basic and acidic residues.

It belongs to the eukaryotic ribosomal protein eS25 family.

This is Small ribosomal subunit protein eS25 (rps25e) from Pyrobaculum aerophilum (strain ATCC 51768 / DSM 7523 / JCM 9630 / CIP 104966 / NBRC 100827 / IM2).